The primary structure comprises 102 residues: MKKASQLSTTILTIFIVLAIGMMVKGTVGKQRLCIKVLTNASHVSKGASTCDSKLCTSLCEKISPQGVSFCKPIATTGQSKKGNPVCNCRYWCRSDGTPHTT.

A signal peptide spans 1–29; sequence MKKASQLSTTILTIFIVLAIGMMVKGTVG. Disulfide bonds link Cys-34-Cys-93, Cys-51-Cys-71, Cys-56-Cys-87, and Cys-60-Cys-89.

The protein belongs to the DEFL family.

It is found in the secreted. The sequence is that of Putative defensin-like protein 152 (LCR11) from Arabidopsis thaliana (Mouse-ear cress).